A 534-amino-acid chain; its full sequence is DNA-directed RNA polymerase III subunit RPC3 (534 aa).

Residues 161–181 are disordered; sequence PSVPTTENSDPGPPPPAPTLV. Serine 194 carries the phosphoserine modification. A disordered region spans residues 197 to 228; that stretch reads GKGKRRRSSDEDAAGEPKAKRPKYTTDNKEPI. A compositionally biased stretch (basic and acidic residues) spans 211–228; sequence GEPKAKRPKYTTDNKEPI.

It belongs to the eukaryotic RPC3/POLR3C RNA polymerase subunit family. As to quaternary structure, component of the RNA polymerase III complex consisting of 17 subunits: a ten-subunit horseshoe-shaped catalytic core composed of POLR3A/RPC1, POLR3B/RPC2, POLR1C/RPAC1, POLR1D/RPAC2, POLR3K/RPC10, POLR2E/RPABC1, POLR2F/RPABC2, POLR2H/RPABC3, POLR2K/RPABC4 and POLR2L/RPABC5; a mobile stalk composed of two subunits POLR3H/RPC8 and CRCP/RPC9, protruding from the core and functioning primarily in transcription initiation; and additional subunits homologous to general transcription factors of the RNA polymerase II machinery, POLR3C/RPC3-POLR3F/RPC6-POLR3G/RPC7 heterotrimer required for transcription initiation and POLR3D/RPC4-POLR3E/RPC5 heterodimer involved in both transcription initiation and termination. Directly interacts with POLR3G/RPC7 and POLR3GL. Directly interacts with POLR3F/RPC6. Interacts with GTF3C4. As part of the RNA polymerase III complex, interacts with PKP2.

The protein resides in the nucleus. In terms of biological role, DNA-dependent RNA polymerase catalyzes the transcription of DNA into RNA using the four ribonucleoside triphosphates as substrates. Specific peripheric component of RNA polymerase III (Pol III) which synthesizes small non-coding RNAs including 5S rRNA, snRNAs, tRNAs and miRNAs from at least 500 distinct genomic loci. Part of POLR3C/RPC3-POLR3F/RPC6-POLR3G/RPC7 heterotrimer, coordinates the dynamics of Pol III stalk and clamp modules during the transition from apo to elongation state. Pol III plays a key role in sensing and limiting infection by intracellular bacteria and DNA viruses. Acts as a nuclear and cytosolic DNA sensor involved in innate immune response. Can sense non-self dsDNA that serves as template for transcription into dsRNA. The non-self RNA polymerase III transcripts, such as Epstein-Barr virus-encoded RNAs (EBERs) induce type I interferon and NF-kappa-B through the RIG-I pathway. Preferentially binds single-stranded DNA (ssDNA) in a sequence-independent manner. The protein is DNA-directed RNA polymerase III subunit RPC3 of Homo sapiens (Human).